The chain runs to 554 residues: Glucose-6-phosphate isomerase (554 aa).

Catalysis depends on glutamate 359, which acts as the Proton donor. Catalysis depends on residues histidine 390 and lysine 518.

This sequence belongs to the GPI family.

The protein localises to the cytoplasm. The enzyme catalyses alpha-D-glucose 6-phosphate = beta-D-fructose 6-phosphate. It functions in the pathway carbohydrate biosynthesis; gluconeogenesis. The protein operates within carbohydrate degradation; glycolysis; D-glyceraldehyde 3-phosphate and glycerone phosphate from D-glucose: step 2/4. Catalyzes the reversible isomerization of glucose-6-phosphate to fructose-6-phosphate. The polypeptide is Glucose-6-phosphate isomerase (Pseudomonas fluorescens (strain ATCC BAA-477 / NRRL B-23932 / Pf-5)).